Here is a 677-residue protein sequence, read N- to C-terminus: UPF0313 protein RPA0679 (677 aa).

Positions 335–601 constitute a Radical SAM core domain; that stretch reads AWDMIKTSVT…VEAIKGLRQR (267 aa). The [4Fe-4S] cluster site is built by Cys-349, Cys-353, and Cys-356. A disordered region spans residues 635 to 677; it reads RPDQLVPAHQPPGTGKAAGTRRPVRGDGPKPQRFTTKGVRLVK.

It belongs to the UPF0313 family. It depends on [4Fe-4S] cluster as a cofactor.

The sequence is that of UPF0313 protein RPA0679 from Rhodopseudomonas palustris (strain ATCC BAA-98 / CGA009).